A 155-amino-acid chain; its full sequence is Ribonuclease H (155 aa).

Residues 9–150 form the RNase H type-1 domain; sequence DGQQVEMWTD…ADALANQGME (142 aa). Positions 18, 56, 78, and 142 each coordinate Mg(2+).

Belongs to the RNase H family. In terms of assembly, monomer. Requires Mg(2+) as cofactor.

The protein resides in the cytoplasm. It catalyses the reaction Endonucleolytic cleavage to 5'-phosphomonoester.. Endonuclease that specifically degrades the RNA of RNA-DNA hybrids. In Bordetella pertussis (strain Tohama I / ATCC BAA-589 / NCTC 13251), this protein is Ribonuclease H.